The following is a 420-amino-acid chain: Serine--tRNA ligase (420 aa).

229 to 231 provides a ligand contact to L-serine; that stretch reads TAE. Position 260–262 (260–262) interacts with ATP; it reads RSE. Glu-283 is an L-serine binding site. An ATP-binding site is contributed by 347 to 350; sequence EISS. Ser-381 provides a ligand contact to L-serine.

This sequence belongs to the class-II aminoacyl-tRNA synthetase family. Type-1 seryl-tRNA synthetase subfamily. As to quaternary structure, homodimer. The tRNA molecule binds across the dimer.

The protein localises to the cytoplasm. The enzyme catalyses tRNA(Ser) + L-serine + ATP = L-seryl-tRNA(Ser) + AMP + diphosphate + H(+). The catalysed reaction is tRNA(Sec) + L-serine + ATP = L-seryl-tRNA(Sec) + AMP + diphosphate + H(+). The protein operates within aminoacyl-tRNA biosynthesis; selenocysteinyl-tRNA(Sec) biosynthesis; L-seryl-tRNA(Sec) from L-serine and tRNA(Sec): step 1/1. Its function is as follows. Catalyzes the attachment of serine to tRNA(Ser). Is also able to aminoacylate tRNA(Sec) with serine, to form the misacylated tRNA L-seryl-tRNA(Sec), which will be further converted into selenocysteinyl-tRNA(Sec). This chain is Serine--tRNA ligase, found in Gluconobacter oxydans (strain 621H) (Gluconobacter suboxydans).